Consider the following 308-residue polypeptide: Ribonuclease Z (308 aa).

Zn(2+)-binding residues include histidine 60, histidine 62, aspartate 64, histidine 65, histidine 140, aspartate 209, and histidine 269. Aspartate 64 acts as the Proton acceptor in catalysis.

Belongs to the RNase Z family. Homodimer. The cofactor is Zn(2+).

It carries out the reaction Endonucleolytic cleavage of RNA, removing extra 3' nucleotides from tRNA precursor, generating 3' termini of tRNAs. A 3'-hydroxy group is left at the tRNA terminus and a 5'-phosphoryl group is left at the trailer molecule.. Zinc phosphodiesterase, which displays some tRNA 3'-processing endonuclease activity. Probably involved in tRNA maturation, by removing a 3'-trailer from precursor tRNA. The chain is Ribonuclease Z from Methanococcus maripaludis (strain DSM 14266 / JCM 13030 / NBRC 101832 / S2 / LL).